A 527-amino-acid polypeptide reads, in one-letter code: MPGVANPGPSKSRRETADSSSRKKVHFSSIHDAVRAGDVKQLSDIVERGANLNEVDALHQFTPLHWAAHSGSLECLHWLLWSGADATQTTTRGWTAAHIAAIRGQDACLQALIINGANLATQDDRGCTPLHLAATHGHSFSLQIMLRSGVDPSVTDKREWKPVHYASFHGRLGCLQLLVKWGCGIEDVDYNGNLPVHLAAMEGHLHCLKFLLSRMNSATQALKAFNDNGENVLDLAQRFLKQNVVEFIQGAQYEGSHPDDHDDLAFPGHVAAFKGDLEVLKKLIGDGVINLNERDDNGSTPMHKAAGQGHIDCLQWLIEMGAESNITNKAGETPSDVAKRFAHLAAVKLLEGLQKYEIDDIESDKDHINFFTRHGVEGSTDAKDDLCLSESDKANARMRAHKKIVELRQLLEIAESNFKHLGGITEEDLKQKKEQLESKKTINELQGQLAYERLRREKLECQLDEYRVEVDQLKETLQKIQVTSVAAMEDDSCESSKEKRRVKKKVSPGGVFVRSYQRIRTSISSQV.

The disordered stretch occupies residues 1–27 (MPGVANPGPSKSRRETADSSSRKKVHF). The segment covering 12–21 (SRRETADSSS) has biased composition (basic and acidic residues). ANK repeat units lie at residues 25–54 (VHFSSIHDAVRAGDVKQLSDIVERGANLNE), 59–88 (HQFTPLHWAAHSGSLECLHWLLWSGADATQ), 92–121 (RGWTAAHIAAIRGQDACLQALIINGANLAT), 125–154 (RGCTPLHLAATHGHSFSLQIMLRSGVDPSV), 158–187 (REWKPVHYASFHGRLGCLQLLVKWGCGIED), 191–220 (NGNLPVHLAAMEGHLHCLKFLLSRMNSATQ), 228–257 (NGENVLDLAQRFLKQNVVEFIQGAQYEGSH), 263–293 (DLAFPGHVAAFKGDLEVLKKLIGDGVINLNE), 297–326 (NGSTPMHKAAGQGHIDCLQWLIEMGAESNI), and 330–360 (AGETPSDVAKRFAHLAAVKLLEGLQKYEIDD). Residues 395-484 (NARMRAHKKI…ETLQKIQVTS (90 aa)) adopt a coiled-coil conformation.

The sequence is that of Ankyrin repeat domain-containing protein 42 (Ankrd42) from Mus musculus (Mouse).